The sequence spans 442 residues: HTH-type transcriptional regulator NorG (442 aa).

The HTH gntR-type domain occupies 2–46 (KIPPQRQLAIQYNVNRVTIIKSIELLEAEGFIYTKVGSGTYVNDY). Positions 6 to 25 (QRQLAIQYNVNRVTIIKSIE) form a DNA-binding region, H-T-H motif. Position 288 is an N6-(pyridoxal phosphate)lysine (lysine 288).

In the C-terminal section; belongs to the class-I pyridoxal-phosphate-dependent aminotransferase family. Requires pyridoxal 5'-phosphate as cofactor.

Functionally, positively regulates the expression of the NorB efflux pump and negatively regulates the expression of the AbcA efflux pump. Binds specifically to the promoters of norA, norB and norC and abcA genes. Could also have an aminotransferase activity. The polypeptide is HTH-type transcriptional regulator NorG (norG) (Staphylococcus aureus (strain Mu50 / ATCC 700699)).